The following is a 505-amino-acid chain: ATP synthase subunit alpha, chloroplastic (505 aa).

Residue 172 to 179 participates in ATP binding; sequence GDRQTGKT.

Belongs to the ATPase alpha/beta chains family. F-type ATPases have 2 components, CF(1) - the catalytic core - and CF(0) - the membrane proton channel. CF(1) has five subunits: alpha(3), beta(3), gamma(1), delta(1), epsilon(1). CF(0) has four main subunits: a, b, b' and c.

Its subcellular location is the plastid. The protein resides in the chloroplast thylakoid membrane. It carries out the reaction ATP + H2O + 4 H(+)(in) = ADP + phosphate + 5 H(+)(out). Its function is as follows. Produces ATP from ADP in the presence of a proton gradient across the membrane. The alpha chain is a regulatory subunit. This chain is ATP synthase subunit alpha, chloroplastic, found in Antithamnion sp. (Red alga).